Here is a 384-residue protein sequence, read N- to C-terminus: Chaperone protein DnaJ (384 aa).

Residues 5–70 enclose the J domain; the sequence is DYYEVLGVSK…DKKAAYDRYG (66 aa). Residues 16 to 47 form a disordered region; sequence ASSDDIKKGYRRKAKELHPDRNKDDPNAEAQF. Basic and acidic residues predominate over residues 31-47; the sequence is ELHPDRNKDDPNAEAQF. Residues 143–221 form a CR-type zinc finger; that stretch reads GLQKTINVPT…CQGAGRVEKD (79 aa). Zn(2+) contacts are provided by cysteine 156, cysteine 159, cysteine 173, cysteine 176, cysteine 195, cysteine 198, cysteine 209, and cysteine 212. CXXCXGXG motif repeat units follow at residues 156-163, 173-180, 195-202, and 209-216; these read CKTCNGSG, CPTCSGMG, CPTCSGLG, and CKSCQGAG.

Belongs to the DnaJ family. As to quaternary structure, homodimer. Zn(2+) is required as a cofactor.

Its subcellular location is the cytoplasm. Participates actively in the response to hyperosmotic and heat shock by preventing the aggregation of stress-denatured proteins and by disaggregating proteins, also in an autonomous, DnaK-independent fashion. Unfolded proteins bind initially to DnaJ; upon interaction with the DnaJ-bound protein, DnaK hydrolyzes its bound ATP, resulting in the formation of a stable complex. GrpE releases ADP from DnaK; ATP binding to DnaK triggers the release of the substrate protein, thus completing the reaction cycle. Several rounds of ATP-dependent interactions between DnaJ, DnaK and GrpE are required for fully efficient folding. Also involved, together with DnaK and GrpE, in the DNA replication of plasmids through activation of initiation proteins. The chain is Chaperone protein DnaJ from Roseobacter denitrificans (strain ATCC 33942 / OCh 114) (Erythrobacter sp. (strain OCh 114)).